A 181-amino-acid chain; its full sequence is Photosystem I assembly protein Ycf4 (181 aa).

2 helical membrane passes run tyrosine 19–phenylalanine 41 and isoleucine 61–threonine 83.

It belongs to the Ycf4 family.

It is found in the plastid. The protein resides in the chloroplast thylakoid membrane. In terms of biological role, seems to be required for the assembly of the photosystem I complex. In Guillardia theta (Cryptophyte), this protein is Photosystem I assembly protein Ycf4.